We begin with the raw amino-acid sequence, 205 residues long: NADH-quinone oxidoreductase subunit I (205 aa).

4Fe-4S ferredoxin-type domains follow at residues 75–104 (RLLESGNERCIGCGLCEKICISNCIRMETS) and 114–143 (HEYTINFGRCIFCGFCAEVCPELAIVHGGR). 8 residues coordinate [4Fe-4S] cluster: Cys84, Cys87, Cys90, Cys94, Cys123, Cys126, Cys129, and Cys133.

This sequence belongs to the complex I 23 kDa subunit family. NDH-1 is composed of 14 different subunits. Subunits NuoA, H, J, K, L, M, N constitute the membrane sector of the complex. Requires [4Fe-4S] cluster as cofactor.

Its subcellular location is the cell inner membrane. The enzyme catalyses a quinone + NADH + 5 H(+)(in) = a quinol + NAD(+) + 4 H(+)(out). Functionally, NDH-1 shuttles electrons from NADH, via FMN and iron-sulfur (Fe-S) centers, to quinones in the respiratory chain. The immediate electron acceptor for the enzyme in this species is believed to be ubiquinone. Couples the redox reaction to proton translocation (for every two electrons transferred, four hydrogen ions are translocated across the cytoplasmic membrane), and thus conserves the redox energy in a proton gradient. This chain is NADH-quinone oxidoreductase subunit I, found in Wolinella succinogenes (strain ATCC 29543 / DSM 1740 / CCUG 13145 / JCM 31913 / LMG 7466 / NCTC 11488 / FDC 602W) (Vibrio succinogenes).